Reading from the N-terminus, the 90-residue chain is Small cysteine-rich outer membrane protein OmcA (90 aa).

The signal sequence occupies residues 1 to 19 (MKKAVLIAAMFCGVVSLSS). C20 carries N-palmitoyl cysteine lipidation. C20 carries S-diacylglycerol cysteine lipidation. A disordered region spans residues 69 to 90 (TECNSQSPQVKGCTSPDGRCKQ).

Part of a disulfide cross-linked outer membrane complex (COMC) composed of the major outer membrane porin (MOMP), the small cysteine-rich protein (OmcA) and the large cysteine-rich periplasmic protein (OmcB).

The protein resides in the cell outer membrane. In terms of biological role, in elementary bodies (EBs, the infectious stage, which is able to survive outside the host cell) provides the structural integrity of the outer envelope through disulfide cross-links with the large cysteine-rich periplasmic protein and the major outer membrane porin. It has been described in publications as the Sarkosyl-insoluble COMC (Chlamydia outer membrane complex), and serves as the functional equivalent of peptidoglycan. This is Small cysteine-rich outer membrane protein OmcA (omcA) from Chlamydia pneumoniae (Chlamydophila pneumoniae).